Consider the following 66-residue polypeptide: Large ribosomal subunit protein uL29 (66 aa).

It belongs to the universal ribosomal protein uL29 family.

The sequence is that of Large ribosomal subunit protein uL29 from Syntrophobacter fumaroxidans (strain DSM 10017 / MPOB).